Here is a 155-residue protein sequence, read N- to C-terminus: 6,7-dimethyl-8-ribityllumazine synthase (155 aa).

5-amino-6-(D-ribitylamino)uracil-binding positions include Tyr23, 57–59 (AWE), and 81–83 (CVI). 86–87 (ET) provides a ligand contact to (2S)-2-hydroxy-3-oxobutyl phosphate. The active-site Proton donor is His89. Phe114 is a 5-amino-6-(D-ribitylamino)uracil binding site. Arg128 lines the (2S)-2-hydroxy-3-oxobutyl phosphate pocket.

Belongs to the DMRL synthase family.

It catalyses the reaction (2S)-2-hydroxy-3-oxobutyl phosphate + 5-amino-6-(D-ribitylamino)uracil = 6,7-dimethyl-8-(1-D-ribityl)lumazine + phosphate + 2 H2O + H(+). The protein operates within cofactor biosynthesis; riboflavin biosynthesis; riboflavin from 2-hydroxy-3-oxobutyl phosphate and 5-amino-6-(D-ribitylamino)uracil: step 1/2. Functionally, catalyzes the formation of 6,7-dimethyl-8-ribityllumazine by condensation of 5-amino-6-(D-ribitylamino)uracil with 3,4-dihydroxy-2-butanone 4-phosphate. This is the penultimate step in the biosynthesis of riboflavin. This chain is 6,7-dimethyl-8-ribityllumazine synthase, found in Rhodopirellula baltica (strain DSM 10527 / NCIMB 13988 / SH1).